Reading from the N-terminus, the 236-residue chain is MASPIHATDDSATFQETDVISGNLLSNDSSDNGHLFLRAFDGASVGAKSGNSQVTEIQGDYGTFFVKPDGSYTYVLSDAAKIGFANGESFQEKVSYKISDGSGHTDVGLFTLNIQGVTQVKPIAVDDHYSFNEGDAIGGNVLDNDIAGDNGHLFLRQFDGTNVSAKSGPDAVTDIVGDYGVFHVKPNGEFTYELTDDLAAGQTVTETVQYYKISDGEGHTDAGVLTLNITGTDALV.

It localises to the secreted. In terms of biological role, interacts specifically in a calcium-dependent manner with the acidic exopolysaccharide (EPS) and capsular polysaccharide produced by R.leguminosarum. Could be involved in the development of the biofilm matrix made of EPS. This Rhizobium johnstonii (strain DSM 114642 / LMG 32736 / 3841) (Rhizobium leguminosarum bv. viciae) protein is Calcium-binding lectin RapA2.